Here is a 2013-residue protein sequence, read N- to C-terminus: Centrosomal protein 224 (2013 aa).

5 HEAT repeats span residues 115-153, 158-196, 200-238, 348-386, and 427-465; these read TIEA…ALKT, QIPV…WIGK, PLIS…EAAK, TSYV…KSIS, and TKVT…IIGE. A disordered region spans residues 512-557; the sequence is PVSSSNKKPAAATGNSKSSSTTTPTGRSSNSSPLPPPPSSSDDIKN. Residues 524–543 are compositionally biased toward low complexity; the sequence is TGNSKSSSTTTPTGRSSNSS. HEAT repeat units lie at residues 724-762, 816-854, 857-895, 899-937, and 977-1015; these read IQQL…NIGA, VDIS…DANR, QPKL…AMGG, EKHA…SDLG, and PSEI…QIPL. The disordered stretch occupies residues 1043–1109; that stretch reads KTGQPIPPPS…QQQQRRSILQ (67 aa). A compositionally biased stretch (low complexity) spans 1053–1106; the sequence is KTKQSTSSSSSSSSTTSQQSSTPSSPQPIRQQQQQQQQQPTQPQQQQQQQQRRS. 3 HEAT repeats span residues 1240–1279, 1281–1314, and 1317–1353; these read EYEA…LCLP, VLFR…KNGA, and CGNL…HIKD. Low complexity-rich tracts occupy residues 1372 to 1406, 1695 to 1735, and 1746 to 1796; these read NNNN…QQQQ, NRIS…INSS, and SNNT…TLST. 4 disordered regions span residues 1372 to 1413, 1695 to 1809, 1905 to 1949, and 1966 to 1995; these read NNNN…SLST, NRIS…YSGK, NQPS…IAPQ, and TLNP…DLNS. The span at 1799-1809 shows a compositional bias: basic and acidic residues; sequence INKEPRDYSGK. The span at 1913 to 1939 shows a compositional bias: low complexity; the sequence is NNNNNNNNNNNNNNNNNINNNNNNNNN. Residues 1940–1949 are compositionally biased toward polar residues; it reads SGGNENIAPQ. The span at 1967 to 1995 shows a compositional bias: low complexity; that stretch reads LNPDQNSGSNNNNSHQNSPSTSSSNDLNS.

The protein belongs to the TOG/XMAP215 family. As to quaternary structure, interacts with eb1 at the microtubule tip, centrosome and kinetochore. Interacts with lis1 in the cortical attachment of microtubules.

It localises to the cytoplasm. The protein localises to the cytoskeleton. The protein resides in the microtubule organizing center. Its subcellular location is the centrosome. It is found in the chromosome. It localises to the centromere. The protein localises to the kinetochore. Functionally, involved in regulation of microtubule dynamics. Regulates the interaction of microtubules tips with the centrosome and cell cortex. In Dictyostelium discoideum (Social amoeba), this protein is Centrosomal protein 224 (mtaA).